A 163-amino-acid chain; its full sequence is Adenosine 5'-monophosphoramidase HINT2 (163 aa).

A mitochondrion-targeting transit peptide spans 1-17; that stretch reads MAAAVVLAAGLRAARRA. The 109-residue stretch at 55–163 folds into the HIT domain; sequence IFSRILDKSL…GGRQLQWPPG (109 aa). The AMP site is built by Ser63 and Asp80. Position 119 is an N6-acetyllysine (Lys119). An AMP-binding site is contributed by Asn136. N6-acetyllysine is present on Lys139. AMP is bound by residues 142 to 145 and 149 to 151; these read AQSV and HIH. Positions 147–151 match the Histidine triad motif motif; the sequence is HLHIH. His149 (tele-AMP-histidine intermediate) is an active-site residue.

It belongs to the HINT family. In terms of tissue distribution, high expression in liver and pancreas. Expression is significantly down-regulated in hepatocellular carcinoma (HCC) patients.

Its subcellular location is the mitochondrion. It carries out the reaction adenosine 5'-phosphoramidate + H2O = AMP + NH4(+). Its function is as follows. Exhibits adenosine 5'-monophosphoramidase activity, hydrolyzing purine nucleotide phosphoramidates with a single phosphate group such as adenosine 5'monophosphoramidate (AMP-NH2) to yield AMP and NH2. Hydrolyzes adenosine 5'-O-p-nitrophenylphosphoramidate (AMP-pNA). Hydrolyzes fluorogenic purine nucleoside tryptamine phosphoramidates in vitro. May be involved in steroid biosynthesis. May play a role in apoptosis. The protein is Adenosine 5'-monophosphoramidase HINT2 of Homo sapiens (Human).